A 64-amino-acid polypeptide reads, in one-letter code: Ferredoxin-2 (64 aa).

4Fe-4S ferredoxin-type domains are found at residues 3–31 (KYLY…MSSA) and 34–64 (YAEV…WREE). [4Fe-4S] cluster is bound by residues cysteine 12, cysteine 15, cysteine 18, and cysteine 54.

In terms of assembly, homodimer. [4Fe-4S] cluster is required as a cofactor.

Functionally, ferredoxins are iron-sulfur proteins that transfer electrons in a wide variety of metabolic reactions. In Nitratidesulfovibrio vulgaris (strain DSM 19637 / Miyazaki F) (Desulfovibrio vulgaris), this protein is Ferredoxin-2.